Consider the following 1084-residue polypeptide: Probable sucrose-phosphate synthase 1 (1084 aa).

Residues 25 to 46 are compositionally biased toward gly residues; the sequence is GGGGGGGGGGGGGGGGGGGGGV. Residues 25–61 are disordered; that stretch reads GGGGGGGGGGGGGGGGGGGGGVDPRSPAAGAASPRGP. Positions 48-61 are enriched in low complexity; that stretch reads PRSPAAGAASPRGP.

This sequence belongs to the glycosyltransferase 1 family. In terms of assembly, homodimer or homotetramer. As to expression, expressed in leaves mesophyll cells, scutellum of germinating seedlings and pollen of immature inflorescences.

It catalyses the reaction beta-D-fructose 6-phosphate + UDP-alpha-D-glucose = sucrose 6(F)-phosphate + UDP + H(+). It functions in the pathway glycan biosynthesis; sucrose biosynthesis; sucrose from D-fructose 6-phosphate and UDP-alpha-D-glucose: step 1/2. Its activity is regulated as follows. Activity is regulated by phosphorylation and moderated by concentration of metabolites and light. Functionally, plays a role in photosynthetic sucrose synthesis by catalyzing the rate-limiting step of sucrose biosynthesis from UDP-glucose and fructose- 6-phosphate. Involved in the regulation of carbon partitioning in the leaves of plants. May regulate the synthesis of sucrose and therefore play a major role as a limiting factor in the export of photoassimilates out of the leaf. Plays a role for sucrose availability that is essential for plant growth and fiber elongation. This chain is Probable sucrose-phosphate synthase 1 (SPS1), found in Oryza sativa subsp. indica (Rice).